A 136-amino-acid chain; its full sequence is Peptide methionine sulfoxide reductase MsrB (136 aa).

In terms of domain architecture, MsrB spans 9-136 (DAEWKALLAE…NSASLDFKPK (128 aa)). 4 residues coordinate Zn(2+): Cys53, Cys56, Cys102, and Cys105. The active-site Nucleophile is the Cys125.

The protein belongs to the MsrB Met sulfoxide reductase family. Zn(2+) is required as a cofactor.

It catalyses the reaction L-methionyl-[protein] + [thioredoxin]-disulfide + H2O = L-methionyl-(R)-S-oxide-[protein] + [thioredoxin]-dithiol. The protein is Peptide methionine sulfoxide reductase MsrB of Polaromonas sp. (strain JS666 / ATCC BAA-500).